The following is a 1223-amino-acid chain: DNA-directed RNA polymerase subunit beta'' (1223 aa).

Positions 233, 307, 314, and 317 each coordinate Zn(2+).

This sequence belongs to the RNA polymerase beta' chain family. RpoC2 subfamily. As to quaternary structure, in plastids the minimal PEP RNA polymerase catalytic core is composed of four subunits: alpha, beta, beta', and beta''. When a (nuclear-encoded) sigma factor is associated with the core the holoenzyme is formed, which can initiate transcription. Zn(2+) serves as cofactor.

Its subcellular location is the plastid. The protein resides in the chloroplast. The enzyme catalyses RNA(n) + a ribonucleoside 5'-triphosphate = RNA(n+1) + diphosphate. Its function is as follows. DNA-dependent RNA polymerase catalyzes the transcription of DNA into RNA using the four ribonucleoside triphosphates as substrates. This is DNA-directed RNA polymerase subunit beta'' from Mesostigma viride (Green alga).